The following is a 219-amino-acid chain: Probable glutathione S-transferase GSTF1 (219 aa).

In terms of domain architecture, GST N-terminal spans 2-83 (TPVKVFGPAQ…YILRKYKTRE (82 aa)). Residues Ser-12, 41 to 42 (HK), 54 to 55 (QI), and 67 to 68 (ES) each bind glutathione. One can recognise a GST C-terminal domain in the interval 91–219 (NLREAAMVDV…LAAVMAPQGA (129 aa)).

It belongs to the GST superfamily. Phi family. In terms of tissue distribution, constitutively expressed in roots.

It catalyses the reaction RX + glutathione = an S-substituted glutathione + a halide anion + H(+). Conjugation of reduced glutathione to a wide number of exogenous and endogenous hydrophobic electrophiles. The chain is Probable glutathione S-transferase GSTF1 (GSTF1) from Oryza sativa subsp. japonica (Rice).